An 89-amino-acid chain; its full sequence is Elongation factor 1-beta (89 aa).

It belongs to the EF-1-beta/EF-1-delta family.

Promotes the exchange of GDP for GTP in EF-1-alpha/GDP, thus allowing the regeneration of EF-1-alpha/GTP that could then be used to form the ternary complex EF-1-alpha/GTP/AAtRNA. This is Elongation factor 1-beta from Methanococcus maripaludis (strain C7 / ATCC BAA-1331).